Reading from the N-terminus, the 527-residue chain is ATP synthase subunit alpha (527 aa).

172 to 179 contributes to the ATP binding site; the sequence is GDRQTGKT.

It belongs to the ATPase alpha/beta chains family. As to quaternary structure, F-type ATPases have 2 components, CF(1) - the catalytic core - and CF(0) - the membrane proton channel. CF(1) has five subunits: alpha(3), beta(3), gamma(1), delta(1), epsilon(1). CF(0) has three main subunits: a(1), b(2) and c(9-12). The alpha and beta chains form an alternating ring which encloses part of the gamma chain. CF(1) is attached to CF(0) by a central stalk formed by the gamma and epsilon chains, while a peripheral stalk is formed by the delta and b chains.

The protein localises to the cell inner membrane. The enzyme catalyses ATP + H2O + 4 H(+)(in) = ADP + phosphate + 5 H(+)(out). Its function is as follows. Produces ATP from ADP in the presence of a proton gradient across the membrane. The alpha chain is a regulatory subunit. This Bacteroides fragilis (strain ATCC 25285 / DSM 2151 / CCUG 4856 / JCM 11019 / LMG 10263 / NCTC 9343 / Onslow / VPI 2553 / EN-2) protein is ATP synthase subunit alpha.